The sequence spans 266 residues: Transmembrane domain-containing protein TMIGD3 (266 aa).

The disordered stretch occupies residues 1-20 (MEGSPAGPIEQKEARWESSW). Residues 55-75 (FLPVMWLFILLSLALISDAMV) traverse the membrane as a helical segment. An N-linked (GlcNAc...) asparagine glycan is attached at Asn-192. A helical membrane pass occupies residues 213 to 233 (ILIICILITGLGIISVISHLT).

In terms of tissue distribution, expressed in the lung and bone. Expressed at lower levels in osteosarcoma tissues (at protein level).

The protein localises to the membrane. In terms of biological role, plays a suppressive role in osteosarcoma malignancy by inhibiting NF-kappa-B activity. The protein is Transmembrane domain-containing protein TMIGD3 of Homo sapiens (Human).